A 176-amino-acid chain; its full sequence is Ribosome maturation factor RimM (176 aa).

Residues 95–169 (EDEVYLFELE…TARIAPPPGL (75 aa)) enclose the PRC barrel domain.

It belongs to the RimM family. In terms of assembly, binds ribosomal protein uS19.

The protein resides in the cytoplasm. In terms of biological role, an accessory protein needed during the final step in the assembly of 30S ribosomal subunit, possibly for assembly of the head region. Essential for efficient processing of 16S rRNA. May be needed both before and after RbfA during the maturation of 16S rRNA. It has affinity for free ribosomal 30S subunits but not for 70S ribosomes. The chain is Ribosome maturation factor RimM from Nitratidesulfovibrio vulgaris (strain ATCC 29579 / DSM 644 / CCUG 34227 / NCIMB 8303 / VKM B-1760 / Hildenborough) (Desulfovibrio vulgaris).